Here is a 71-residue protein sequence, read N- to C-terminus: UPF0346 protein SZO_05010 (71 aa).

Belongs to the UPF0346 family.

This Streptococcus equi subsp. zooepidemicus (strain H70) protein is UPF0346 protein SZO_05010.